A 497-amino-acid chain; its full sequence is Signal recognition particle subunit SRP54 2 (497 aa).

Residues 1-297 are G-domain; the sequence is MVLAELGGRI…DAKPFVSRLL (297 aa). Residues 108-117, 192-196, and 250-253 each bind GTP; these read GLQGEVLEKP, DTSGR, and TKMD. The interval 298–497 is M-domain; it reads GNGDMSGFVN…LMGMFGGRDE (200 aa).

Belongs to the GTP-binding SRP family. SRP54 subfamily. Component of a signal recognition particle (SRP) complex that consists of a 7SL RNA molecule of 300 nucleotides and six protein subunits: SRP72, SRP68, SRP54, SRP19, SRP14 and SRP9.

It localises to the cytoplasm. The protein localises to the endoplasmic reticulum. The enzyme catalyses GTP + H2O = GDP + phosphate + H(+). Functionally, component of the signal recognition particle (SRP) complex, a ribonucleoprotein complex that mediates the cotranslational targeting of secretory and membrane proteins to the endoplasmic reticulum (ER). As part of the SRP complex, associates with the SRP receptor (SR) component SRPRA to target secretory proteins to the endoplasmic reticulum membrane. Binds to the signal sequence of presecretory proteins when they emerge from the ribosomes. Displays basal GTPase activity, and stimulates reciprocal GTPase activation of the SR subunit SRPRA. Forms a guanosine 5'-triphosphate (GTP)-dependent complex with the SR subunit SRPRA. SR compaction and GTPase mediated rearrangement of SR drive SRP-mediated cotranslational protein translocation into the ER. Requires the presence of SRP9/SRP14 and/or SRP19 to stably interact with RNA. This chain is Signal recognition particle subunit SRP54 2 (SRP-54B), found in Arabidopsis thaliana (Mouse-ear cress).